A 477-amino-acid chain; its full sequence is Ankyrin repeat, SAM and basic leucine zipper domain-containing protein 1 (477 aa).

Ser-17, Ser-18, and Ser-20 each carry phosphoserine. 6 ANK repeats span residues 46–76, 80–109, 112–146, 150–179, 183–212, and 216–245; these read EKKE…SVDA, YGWT…NASF, DKQT…DPNV, RLMT…EVNT, NGYT…NKML, and DGKL…PLEG. The region spanning 274 to 336 is the SAM domain; it reads SYAAFGDLEV…KILTALKELE (63 aa).

In terms of assembly, interacts with DDX4, PIWIL1, RANBP9 and TDRD1.

It localises to the cytoplasm. Its function is as follows. Plays a central role during spermatogenesis by repressing transposable elements and preventing their mobilization, which is essential for the germline integrity. Acts via the piRNA metabolic process, which mediates the repression of transposable elements during meiosis by forming complexes composed of piRNAs and Piwi proteins and governs the methylation and subsequent repression of transposons. Its association with pi-bodies suggests a participation in the primary piRNAs metabolic process. Required prior to the pachytene stage to facilitate the production of multiple types of piRNAs, including those associated with repeats involved in the regulation of retrotransposons. May act by mediating protein-protein interactions during germ cell maturation. The polypeptide is Ankyrin repeat, SAM and basic leucine zipper domain-containing protein 1 (ASZ1) (Ateles geoffroyi (Black-handed spider monkey)).